Here is a 409-residue protein sequence, read N- to C-terminus: MLNMQQHPSAIASLRNQLAAGHIANLTDFWREAESLNVPLVTPVEGAEDEREVTFLWRARHPLQGVYLRLNRVTDKEHVEKGMMSALPETDIWTLTLRLPASYCGSYSLLEIPPGTTAETIALSGGRFATLAGKADPLNKMPEINVRGNAKESVLTLDKAPALSEWNGGFHTGQLLTSMRIIAGKSRQVRLYIPDIDISQPLGLVVLPDGETWFDHLGVCAAIDAAINNRRIVPVAVLGIDNINEHERTEILGGRSKLIKDIAGHLLPMIRAEQPQRQWADRSRTVLAGQSLGGISALMGARYAPETFGLVLSHSPSMWWTPERTSRPGLFSETDTSWVSEHLLSAPPQGVRISLCVGSLEGSTVPHVQQLHQRLITAGVESHCAIYTGGHDYAWWRGALIDGIGLLQG.

The protein belongs to the Fes family.

It is found in the cytoplasm. It carries out the reaction Fe(III)-C-5-deoxy-beta-D-glucosyl-enterobactin + H2O = Fe(III)-{di[N-(2,3-dihydroxybenzoyl)-L-seryl]-N-(C-5-[deoxy-beta-D-glucosyl]-2,3-dihydroxybenzoyl)-L-serine} + H(+). The enzyme catalyses Fe(III)-{di[N-(2,3-dihydroxybenzoyl)-L-seryl]-N-(C-5-[deoxy-beta-D-glucosyl]-2,3-dihydroxybenzoyl)-L-serine} + H2O + H(+) = Fe(III)-{N-(2,3-dihydroxybenzoyl)-L-seryl-N-(C-5-[deoxy-beta-D-glucosyl]-2,3-dihydroxybenzoyl)-L-serine} + N-(2,3-dihydroxybenzoyl)-L-serine. It catalyses the reaction Fe(III)-{N-(2,3-dihydroxybenzoyl)-L-seryl-[N-(C-5-[deoxy-beta-D-glucosyl]-2,3-dihydroxybenzoyl)-L-serine]2} + H2O + H(+) = Fe(III)-{N-(2,3-dihydroxybenzoyl)-L-seryl-N-(C-5-[deoxy-beta-D-glucosyl]-2,3-dihydroxybenzoyl)-L-serine} + N-(C-5-[deoxy-beta-D-glucosyl]-2,3-dihydroxybenzoyl)-L-serine. The catalysed reaction is Fe(III)-di(C-5-deoxy-beta-D-glucosyl)-enterobactin + H2O = Fe(III)-{N-(2,3-dihydroxybenzoyl)-L-seryl-[N-(C-5-[deoxy-beta-D-glucosyl]-2,3-dihydroxybenzoyl)-L-serine]2} + H(+). It carries out the reaction Fe(III)-{N-(2,3-dihydroxybenzoyl)-L-seryl-[N-(C-5-[deoxy-beta-D-glucosyl]-2,3-dihydroxybenzoyl)-L-serine]2} + H2O + H(+) = Fe(III)-[N-(C-5-[deoxy-beta-D-glucosyl]-2,3-dihydroxybenzoyl)-L-serine]2 + N-(2,3-dihydroxybenzoyl)-L-serine. The enzyme catalyses Fe(III)-[N-(C-5-[deoxy-beta-D-glucosyl]-2,3-dihydroxybenzoyl)-L-serine]2 + H2O + H(+) = Fe(III)-[N-(C-5-[deoxy-beta-D-glucosyl]-2,3-dihydroxybenzoyl)-L-serine] + N-(C-5-[deoxy-beta-D-glucosyl]-2,3-dihydroxybenzoyl)-L-serine. In terms of biological role, catalyzes the hydrolysis of both the apo and Fe3(+)-bound forms of enterobactin (Ent), monoglucosyl-C-Ent (MGE), diglucosyl-C-Ent (DGE) and triglucosyl-C-Ent (TGE). Shows higher catalytic efficiencies on Fe3(+)-bound forms. The initial linear trimer products are, in turn, very good substrates for further hydrolytic cleavage by IroD, leading to complete degradation of the trilactone to DHB-Ser and/or Glc-DHB-Ser monomers. Hydrolyzes MGE and DGE regioselectively. May be the ferric MGE/DGE esterase responsible for cytoplasmic iron release. This Escherichia coli O6:H1 (strain CFT073 / ATCC 700928 / UPEC) protein is Iron(III) salmochelin esterase.